The sequence spans 527 residues: Phosphoenolpyruvate carboxykinase (ATP) (527 aa).

R56, Y191, and K197 together coordinate substrate. Residues K197, H216, and 232-240 contribute to the ATP site; that span reads GLSGTGKTT. Residues K197 and H216 each coordinate Mn(2+). Residue D253 participates in Mn(2+) binding. Residues E281, R318, 437-438, and T443 each bind ATP; that span reads RI. Residue R318 coordinates substrate.

Belongs to the phosphoenolpyruvate carboxykinase (ATP) family. Mn(2+) is required as a cofactor.

It localises to the cytoplasm. The enzyme catalyses oxaloacetate + ATP = phosphoenolpyruvate + ADP + CO2. It participates in carbohydrate biosynthesis; gluconeogenesis. In terms of biological role, involved in the gluconeogenesis. Catalyzes the conversion of oxaloacetate (OAA) to phosphoenolpyruvate (PEP) through direct phosphoryl transfer between the nucleoside triphosphate and OAA. The protein is Phosphoenolpyruvate carboxykinase (ATP) of Shouchella clausii (strain KSM-K16) (Alkalihalobacillus clausii).